The primary structure comprises 444 residues: Docking protein 3 (444 aa).

A PH domain is found at 7–123 (PVKDGILYQQ…WVDPICQLAF (117 aa)). The residue at position 138 (Ser-138) is a Phosphoserine. One can recognise an IRS-type PTB domain in the interval 157–261 (EVTEFPVIVQ…ARQRERLPEL (105 aa)). Ser-274 carries the phosphoserine modification. The segment at 278-299 (LEPPGELREVAPGFELPTPRKL) is disordered. Phosphoserine is present on residues Ser-308 and Ser-314. Tyr-325 is subject to Phosphotyrosine. Residues 354 to 390 (GLTNGGPEAQEGPPGGRSPLGSPIYHNTEDLSWPGSA) are disordered. Positions 358 to 376 (GGPEAQEGPPGGRSPLGSP) are enriched in low complexity. A Phosphoserine modification is found at Ser-371.

It belongs to the DOK family. Type A subfamily. In terms of assembly, on tyrosine phosphorylation, interacts with CSK and INPP5D/SHIP1 via their SH2 domains. Both Tyr-325 and Tyr-343 are required for interaction with INPP5D. Only Tyr-325 is required for interaction with CSK. Binds ABL1 through the PTB domain and in a kinase-dependent manner. Does not interact with RasGAP. Post-translationally, constitutively tyrosine-phosphorylated. On IL2 stimulation, phosphorylated on C-terminal tyrosine residues possibly by Src kinases. Can also be phosphorylated by ABL1 kinase. Predominantly expressed in bone marrow, spleen and lung. Low levels in heart, brain, liver, muscle, thymus, kidney and testis. Highly expressed in B-cells and macrophages.

Its subcellular location is the cytoplasm. It is found in the cell membrane. DOK proteins are enzymatically inert adaptor or scaffolding proteins. They provide a docking platform for the assembly of multimolecular signaling complexes. DOK3 is a negative regulator of JNK signaling in B-cells through interaction with INPP5D/SHIP1. May modulate ABL1 function. In Mus musculus (Mouse), this protein is Docking protein 3 (Dok3).